The primary structure comprises 286 residues: Probable endonuclease 4 (286 aa).

Zn(2+)-binding residues include His-67, His-107, Glu-146, Asp-180, His-183, His-217, Asp-230, His-232, and Glu-262.

Belongs to the AP endonuclease 2 family. Zn(2+) serves as cofactor.

It carries out the reaction Endonucleolytic cleavage to 5'-phosphooligonucleotide end-products.. In terms of biological role, endonuclease IV plays a role in DNA repair. It cleaves phosphodiester bonds at apurinic or apyrimidinic (AP) sites, generating a 3'-hydroxyl group and a 5'-terminal sugar phosphate. This is Probable endonuclease 4 from Methanosphaerula palustris (strain ATCC BAA-1556 / DSM 19958 / E1-9c).